The following is a 105-amino-acid chain: Urease subunit beta (105 aa).

The protein belongs to the urease beta subunit family. As to quaternary structure, heterotrimer of UreA (gamma), UreB (beta) and UreC (alpha) subunits. Three heterotrimers associate to form the active enzyme.

It is found in the cytoplasm. It catalyses the reaction urea + 2 H2O + H(+) = hydrogencarbonate + 2 NH4(+). It functions in the pathway nitrogen metabolism; urea degradation; CO(2) and NH(3) from urea (urease route): step 1/1. The polypeptide is Urease subunit beta (Pseudomonas putida (strain GB-1)).